Reading from the N-terminus, the 341-residue chain is Cell division protein FtsQ (341 aa).

The Cytoplasmic segment spans residues 1 to 126; that stretch reads MTETDEGAPV…VARGVVRGLK (126 aa). Residues 127–147 traverse the membrane as a helical segment; the sequence is TLFATVMFSIAGFGLGLALYV. The Extracellular portion of the chain corresponds to 148 to 341; that stretch reads TPAMSVRNIV…VSSPDLPTVK (194 aa). The region spanning 151-219 is the POTRA domain; that stretch reads MSVRNIVVTG…SALRITIVER (69 aa).

It belongs to the FtsQ/DivIB family. FtsQ subfamily.

The protein resides in the cell membrane. Functionally, essential cell division protein. The polypeptide is Cell division protein FtsQ (Mycobacterium leprae (strain Br4923)).